A 365-amino-acid polypeptide reads, in one-letter code: Serine/threonine-protein kinase SAPK6 (365 aa).

The Protein kinase domain occupies 4–260 (YELLKDIGSG…IREIRNHPWF (257 aa)). ATP is bound by residues 10–18 (IGSGNFGVA) and K33. D123 (proton acceptor) is an active-site residue. The interval 298-365 (VQEAKTPPPS…AHASCDLQKS (68 aa)) is disordered. Over residues 317–347 (TEEEEQEDGKNPDDDEGDRDEEEGEEGDSED) the composition is skewed to acidic residues.

The protein belongs to the protein kinase superfamily. Ser/Thr protein kinase family. In terms of assembly, interacts with BZIP46. Post-translationally, may be phosphorylated. Expressed in leaf blades and leaf sheaths. Expressed in shoots and roots of young seedlings.

It catalyses the reaction L-seryl-[protein] + ATP = O-phospho-L-seryl-[protein] + ADP + H(+). The catalysed reaction is L-threonyl-[protein] + ATP = O-phospho-L-threonyl-[protein] + ADP + H(+). Activated by hyperosmotic stress. In terms of biological role, may play a role in signal transduction of hyperosmotic response. Can phosphorylate ABI5 in vitro. Can phosphorylate BZIP46 in vitro. In Oryza sativa subsp. japonica (Rice), this protein is Serine/threonine-protein kinase SAPK6.